The primary structure comprises 475 residues: Aspartyl/glutamyl-tRNA(Asn/Gln) amidotransferase subunit B (475 aa).

It belongs to the GatB/GatE family. GatB subfamily. As to quaternary structure, heterotrimer of A, B and C subunits.

It catalyses the reaction L-glutamyl-tRNA(Gln) + L-glutamine + ATP + H2O = L-glutaminyl-tRNA(Gln) + L-glutamate + ADP + phosphate + H(+). The enzyme catalyses L-aspartyl-tRNA(Asn) + L-glutamine + ATP + H2O = L-asparaginyl-tRNA(Asn) + L-glutamate + ADP + phosphate + 2 H(+). Functionally, allows the formation of correctly charged Asn-tRNA(Asn) or Gln-tRNA(Gln) through the transamidation of misacylated Asp-tRNA(Asn) or Glu-tRNA(Gln) in organisms which lack either or both of asparaginyl-tRNA or glutaminyl-tRNA synthetases. The reaction takes place in the presence of glutamine and ATP through an activated phospho-Asp-tRNA(Asn) or phospho-Glu-tRNA(Gln). This Bacillus thuringiensis subsp. konkukian (strain 97-27) protein is Aspartyl/glutamyl-tRNA(Asn/Gln) amidotransferase subunit B.